We begin with the raw amino-acid sequence, 476 residues long: Serine protease HTRA4 (476 aa).

An N-terminal signal peptide occupies residues 1 to 31; sequence MIRPQLRTAGLGRCLLPGLLLLLVPVLWAGA. An IGFBP N-terminal domain is found at 36 to 109; sequence TQPSCPAVCQ…PGFPSTCGCP (74 aa). Cystine bridges form between cysteine 40/cysteine 66, cysteine 44/cysteine 68, cysteine 49/cysteine 69, cysteine 55/cysteine 72, cysteine 80/cysteine 94, cysteine 88/cysteine 106, cysteine 108/cysteine 127, and cysteine 116/cysteine 152. Residues 88–154 form the Kazal-like domain; it reads CAPGLQCLQP…VPVQWGNCGD (67 aa). The tract at residues 202–362 is serine protease; that stretch reads GSGFIVSEDG…IPSDRVRQFL (161 aa). Catalysis depends on charge relay system residues histidine 218, aspartate 248, and serine 326. Residues 383–474 enclose the PDZ domain; the sequence is LQMLSLTVPL…NLLLTVIPET (92 aa).

Belongs to the peptidase S1C family.

It is found in the secreted. Serine protease. The chain is Serine protease HTRA4 (HTRA4) from Homo sapiens (Human).